The sequence spans 242 residues: uncharacterized protein (242 aa).

Positions 1–17 (MKFSPAYLLAFAPIVAA) are cleaved as a signal peptide. Asn-47, Asn-86, Asn-122, Asn-159, and Asn-178 each carry an N-linked (GlcNAc...) asparagine glycan. Residues 176 to 214 (NANESTADGQAQSGSSGSSSDSGSHSGHSSATQTSSTTA) form a disordered region. Residues 180–214 (STADGQAQSGSSGSSSDSGSHSGHSSATQTSSTTA) are compositionally biased toward low complexity. The GPI-like-anchor amidated alanine moiety is linked to residue Ala-218. The propeptide at 219-242 (GAVALETAAWGILGAAVVGGLAVL) is removed in mature form.

The GPI-like anchor contains a phosphoceramide lipid group. The anchor position has not been determined.

It localises to the cell membrane. This is an uncharacterized protein from Aspergillus fumigatus (strain ATCC MYA-4609 / CBS 101355 / FGSC A1100 / Af293) (Neosartorya fumigata).